The chain runs to 147 residues: Elongation factor Tu (147 aa).

The protein belongs to the GTP-binding elongation factor family. EF-Tu/EF-1A subfamily. As to quaternary structure, monomer.

It is found in the cytoplasm. This protein promotes the GTP-dependent binding of aminoacyl-tRNA to the A-site of ribosomes during protein biosynthesis. The sequence is that of Elongation factor Tu (tuf) from Fructilactobacillus sanfranciscensis (Lactobacillus sanfranciscensis).